A 649-amino-acid chain; its full sequence is PTS system mannitol-specific EIICBA component (649 aa).

One can recognise a PTS EIIC type-2 domain in the interval 13 to 342 (FGRFLSNMVM…LLMKAQTSTE (330 aa)). Helical transmembrane passes span 25–46 (IGAFIAWGFITALFIPTGWVPN), 51–71 (SLVGPMITYLLPLLIGYTGGK), 135–156 (SAGIIGMLCAIIAFFLIGPFVK), 166–186 (VNFLVTAHLLPLTSIFVEPAK), 274–293 (AIAGGMTGVFTLTVFNAGLV), and 314–335 (LGVVCSIFAAAAVSFTVAALLM). A PTS EIIB type-2 domain is found at 384–475 (QSIIVACDAG…LVTQLLAAKR (92 aa)). Cys390 serves as the catalytic Phosphocysteine intermediate; for EIIB activity. Cys390 bears the Phosphocysteine; by EIIA mark. One can recognise a PTS EIIA type-2 domain in the interval 504–646 (FQLQKENIHL…SDVLSILATS (143 aa)). Catalysis depends on His564, which acts as the Tele-phosphohistidine intermediate; for EIIA activity. Phosphohistidine; by HPr is present on His564.

As to quaternary structure, homodimer. An intramolecular phosphotransfer takes places between His-564 and Cys-390.

Its subcellular location is the cell inner membrane. The catalysed reaction is D-mannitol(out) + N(pros)-phospho-L-histidyl-[protein] = D-mannitol 1-phosphate(in) + L-histidyl-[protein]. Its function is as follows. The phosphoenolpyruvate-dependent sugar phosphotransferase system (sugar PTS), a major carbohydrate active transport system, catalyzes the phosphorylation of incoming sugar substrates concomitantly with their translocation across the cell membrane. This system is involved in D-mannitol transport. The sequence is that of PTS system mannitol-specific EIICBA component (mtlA) from Vibrio cholerae serotype O1 (strain ATCC 39315 / El Tor Inaba N16961).